Here is a 182-residue protein sequence, read N- to C-terminus: Glutathione-regulated potassium-efflux system ancillary protein KefG (182 aa).

The protein belongs to the NAD(P)H dehydrogenase (quinone) family. KefG subfamily. As to quaternary structure, interacts with KefB.

It is found in the cell inner membrane. It catalyses the reaction a quinone + NADH + H(+) = a quinol + NAD(+). The enzyme catalyses a quinone + NADPH + H(+) = a quinol + NADP(+). Functionally, regulatory subunit of a potassium efflux system that confers protection against electrophiles. Required for full activity of KefB. The polypeptide is Glutathione-regulated potassium-efflux system ancillary protein KefG (Yersinia pestis bv. Antiqua (strain Nepal516)).